Here is a 223-residue protein sequence, read N- to C-terminus: Putative endonuclease segD (223 aa).

In terms of domain architecture, GIY-YIG spans 4-87; the sequence is MKYLIYQITN…FVMRTDTYNA (84 aa).

It to endonucleases of group I introns of fungi and phage. Requires Mg(2+) as cofactor.

Functionally, probably involved in the movement of the endonuclease-encoding DNA. This is Putative endonuclease segD (segD) from Enterobacteria phage T4 (Bacteriophage T4).